Here is a 790-residue protein sequence, read N- to C-terminus: Nuclear cap-binding protein subunit 1 (790 aa).

A disordered region spans residues 1-26; that stretch reads MSRRRHSYENDGGQPHKRRKTSDANE. The short motif at 3–20 is the Nuclear localization signal element; that stretch reads RRRHSYENDGGQPHKRRK. Ser7 is modified (phosphoserine). Thr21 carries the phosphothreonine modification. Phosphoserine occurs at positions 22 and 201. An MIF4G domain is found at 28–240; sequence EDHLESLICK…CLWAQIQKLK (213 aa). N6-acetyllysine is present on Lys204. Residues 643–713 adopt a coiled-coil conformation; sequence STIRKMNKHV…SEQKNLFLVI (71 aa). The disordered stretch occupies residues 666 to 685; it reads LARQHKRRSDDDDRSSDRKD. A Glycyl lysine isopeptide (Lys-Gly) (interchain with G-Cter in SUMO2) cross-link involves residue Lys684. At Lys698 the chain carries N6-acetyllysine.

The protein belongs to the NCBP1 family. In terms of assembly, component of the nuclear cap-binding complex (CBC), a heterodimer composed of NCBP1/CBP80 and NCBP2/CBP20 that interacts with m7GpppG-capped RNA. Found in a U snRNA export complex containing PHAX/RNUXA, NCBP1/CBP80, NCBP2/CBP20, RAN, XPO1 and m7G-capped RNA. Identified in a IGF2BP1-dependent mRNP granule complex containing untranslated mRNAs. Interacts with PHAX/RNUXA, SRRT/ARS2, EIF4G2, IGF2BP1, HNRNPF, HNRNPH1, KIAA0427/CTIF, PARN, DROSHA, UPF1 and ALYREF/THOC4. May interact with EIF4G1; the interaction is however controversial. The large PER complex involved in the repression of transcriptional termination is composed of at least PER2, CDK9, DDX5, DHX9, NCBP1/CBP80 and POLR2A (active). Component of an alternative nuclear cap-binding complex (CBC) composed of NCBP1/CBP80 and NCBP3. Interacts with METTL3. Interacts with ZFC3H1 in a RNase-insensitive manner. Interacts with MTREX. Interacts with TASOR. Interacts with DHX34; the interaction is RNA-dependent. Interacts with KPNA3. Dephosphorylated at Thr-21 by the PNUTS-PP1 complex during RNA polymerase II transcription pause-release. As to expression, expressed in the spermatogonia, spermatocytes and granular cells within the cerebellum.

The protein resides in the nucleus. It localises to the cytoplasm. Its function is as follows. Component of the cap-binding complex (CBC), which binds cotranscriptionally to the 5'-cap of pre-mRNAs and is involved in various processes such as pre-mRNA splicing, translation regulation, nonsense-mediated mRNA decay, RNA-mediated gene silencing (RNAi) by microRNAs (miRNAs) and mRNA export. The CBC complex is involved in mRNA export from the nucleus via its interaction with ALYREF/THOC4/ALY, leading to the recruitment of the mRNA export machinery to the 5'-end of mRNA and to mRNA export in a 5' to 3' direction through the nuclear pore. The CBC complex is also involved in mediating U snRNA and intronless mRNAs export from the nucleus. The CBC complex is essential for a pioneer round of mRNA translation, before steady state translation when the CBC complex is replaced by cytoplasmic cap-binding protein eIF4E. The pioneer round of mRNA translation mediated by the CBC complex plays a central role in nonsense-mediated mRNA decay (NMD), NMD only taking place in mRNAs bound to the CBC complex, but not on eIF4E-bound mRNAs. The CBC complex enhances NMD in mRNAs containing at least one exon-junction complex (EJC) via its interaction with UPF1, promoting the interaction between UPF1 and UPF2. The CBC complex is also involved in 'failsafe' NMD, which is independent of the EJC complex, while it does not participate in Staufen-mediated mRNA decay (SMD). During cell proliferation, the CBC complex is also involved in microRNAs (miRNAs) biogenesis via its interaction with SRRT/ARS2 and is required for miRNA-mediated RNA interference. The CBC complex also acts as a negative regulator of PARN, thereby acting as an inhibitor of mRNA deadenylation. In the CBC complex, NCBP1/CBP80 does not bind directly capped RNAs (m7GpppG-capped RNA) but is required to stabilize the movement of the N-terminal loop of NCBP2/CBP20 and lock the CBC into a high affinity cap-binding state with the cap structure. Associates with NCBP3 to form an alternative cap-binding complex (CBC) which plays a key role in mRNA export and is particularly important in cellular stress situations such as virus infections. The conventional CBC with NCBP2 binds both small nuclear RNA (snRNA) and messenger (mRNA) and is involved in their export from the nucleus whereas the alternative CBC with NCBP3 does not bind snRNA and associates only with mRNA thereby playing a role only in mRNA export. NCBP1/CBP80 is required for cell growth and viability. The sequence is that of Nuclear cap-binding protein subunit 1 (Ncbp1) from Mus musculus (Mouse).